Here is a 405-residue protein sequence, read N- to C-terminus: Tryptophan synthase beta chain (405 aa).

Lys-98 carries the N6-(pyridoxal phosphate)lysine modification.

This sequence belongs to the TrpB family. In terms of assembly, tetramer of two alpha and two beta chains. Pyridoxal 5'-phosphate serves as cofactor.

It carries out the reaction (1S,2R)-1-C-(indol-3-yl)glycerol 3-phosphate + L-serine = D-glyceraldehyde 3-phosphate + L-tryptophan + H2O. It participates in amino-acid biosynthesis; L-tryptophan biosynthesis; L-tryptophan from chorismate: step 5/5. Its function is as follows. The beta subunit is responsible for the synthesis of L-tryptophan from indole and L-serine. The chain is Tryptophan synthase beta chain from Bradyrhizobium diazoefficiens (strain JCM 10833 / BCRC 13528 / IAM 13628 / NBRC 14792 / USDA 110).